Here is a 279-residue protein sequence, read N- to C-terminus: Calcium-activated potassium channel subunit beta-3 (279 aa).

The Cytoplasmic segment spans residues 1-60 (MDFSPSSELGFHFVAFILLTRHRTAFPASGKKRETDYSDGDPLDVHKRLPSSAGEDRAVM). A helical transmembrane segment spans residues 61–81 (LGFAMMGFSVLMFFLLGTTIL). Residues 82–207 (KPFMLSIQRE…DVILIKKYDQ (126 aa)) lie on the Extracellular side of the membrane. Asn-131 carries N-linked (GlcNAc...) asparagine glycosylation. A helical transmembrane segment spans residues 208–228 (MAIFHCLFWPSLTLLGGALIV). At 229-279 (GMVRLTQHLSLLCEKYSTVVRDEVGGKVPYIEQHQFKLCIMRRSKGRAEKS) the chain is on the cytoplasmic side.

It belongs to the KCNMB (TC 8.A.14.1) family. KCNMB3 subfamily. As to quaternary structure, interacts with KCNMA1 tetramer. There are probably 4 molecules of KCMNB3 per KCNMA1 tetramer. Post-translationally, N-glycosylated. The extracellular domain contains disulfide bond essential for the gating mechanism. Isoform 1, isoform 3 and isoform 4 are widely expressed. Isoform 2 is expressed placenta, pancreas, kidney and heart. Isoform 1 and isoform 3 are highly expressed in pancreas and testis.

Its subcellular location is the membrane. Its function is as follows. Regulatory subunit of the calcium activated potassium KCNMA1 (maxiK) channel. Modulates the calcium sensitivity and gating kinetics of KCNMA1, thereby contributing to KCNMA1 channel diversity. Alters the functional properties of the current expressed by the KCNMA1 channel. Isoform 2, isoform 3 and isoform 4 partially inactivate the current of KCNBMA. Isoform 4 induces a fast and incomplete inactivation of KCNMA1 channel that is detectable only at large depolarizations. In contrast, isoform 1 does not induce detectable inactivation of KCNMA1. Two or more subunits of KCNMB3 are required to block the KCNMA1 tetramer. The sequence is that of Calcium-activated potassium channel subunit beta-3 (KCNMB3) from Homo sapiens (Human).